Here is a 333-residue protein sequence, read N- to C-terminus: Fe(3+)-citrate import system permease protein YfmD (333 aa).

9 helical membrane-spanning segments follow: residues 13–33 (LMMF…NLSV), 67–87 (TLIG…MQAM), 97–117 (IFGV…ILPA), 121–141 (SSVI…YMIA), 151–171 (LALS…AIII), 201–221 (FSVI…VLGL), 238–258 (ILIS…AGPI), 279–299 (YVLP…DVLA), and 302–322 (IAFP…TPFF).

The protein belongs to the binding-protein-dependent transport system permease family. FecCD subfamily. The complex is composed of one ATP-binding protein (YfmF), two transmembrane proteins (YfmD and YfmE) and a solute-binding protein (YfmC).

It localises to the cell membrane. Its function is as follows. Part of the ABC transporter complex YfmCDEF involved in citrate-dependent Fe(3+) import. Involved in the translocation of the substrate across the membrane. The polypeptide is Fe(3+)-citrate import system permease protein YfmD (yfmD) (Bacillus subtilis (strain 168)).